The primary structure comprises 415 residues: Glucose-1-phosphate adenylyltransferase (415 aa).

Alpha-D-glucose 1-phosphate contacts are provided by residues Y98, G163, 178 to 179 (EK), and S189.

It belongs to the bacterial/plant glucose-1-phosphate adenylyltransferase family. Homotetramer.

It carries out the reaction alpha-D-glucose 1-phosphate + ATP + H(+) = ADP-alpha-D-glucose + diphosphate. Its pathway is glycan biosynthesis; glycogen biosynthesis. In terms of biological role, involved in the biosynthesis of ADP-glucose, a building block required for the elongation reactions to produce glycogen. Catalyzes the reaction between ATP and alpha-D-glucose 1-phosphate (G1P) to produce pyrophosphate and ADP-Glc. The sequence is that of Glucose-1-phosphate adenylyltransferase from Fervidobacterium nodosum (strain ATCC 35602 / DSM 5306 / Rt17-B1).